A 392-amino-acid chain; its full sequence is Protein FAM53C (392 aa).

Position 1 is an N-acetylmethionine (Met-1). Residues His-77–Ser-120 are disordered. Over residues Arg-83–Ser-93 the composition is skewed to polar residues. Phosphoserine is present on residues Ser-122 and Ser-162. Disordered stretches follow at residues Leu-141 to Val-167, Ser-203 to Asp-303, and Ser-340 to Val-364. A compositionally biased stretch (polar residues) spans Ser-203–Trp-215. A phosphoserine mark is found at Ser-232, Ser-234, Ser-255, Ser-273, and Ser-299. Residues Ala-241–Pro-256 show a composition bias toward low complexity. Over residues Leu-278–Asp-303 the composition is skewed to basic and acidic residues.

This sequence belongs to the FAM53 family.

In Pongo abelii (Sumatran orangutan), this protein is Protein FAM53C.